Reading from the N-terminus, the 224-residue chain is Biosynthetic peptidoglycan transglycosylase (224 aa).

Residues 9 to 29 (VLILVSFVLLIQLWIFCSLAW) traverse the membrane as a helical segment.

The protein belongs to the glycosyltransferase 51 family.

The protein resides in the cell inner membrane. It carries out the reaction [GlcNAc-(1-&gt;4)-Mur2Ac(oyl-L-Ala-gamma-D-Glu-L-Lys-D-Ala-D-Ala)](n)-di-trans,octa-cis-undecaprenyl diphosphate + beta-D-GlcNAc-(1-&gt;4)-Mur2Ac(oyl-L-Ala-gamma-D-Glu-L-Lys-D-Ala-D-Ala)-di-trans,octa-cis-undecaprenyl diphosphate = [GlcNAc-(1-&gt;4)-Mur2Ac(oyl-L-Ala-gamma-D-Glu-L-Lys-D-Ala-D-Ala)](n+1)-di-trans,octa-cis-undecaprenyl diphosphate + di-trans,octa-cis-undecaprenyl diphosphate + H(+). It functions in the pathway cell wall biogenesis; peptidoglycan biosynthesis. In terms of biological role, peptidoglycan polymerase that catalyzes glycan chain elongation from lipid-linked precursors. In Acinetobacter baylyi (strain ATCC 33305 / BD413 / ADP1), this protein is Biosynthetic peptidoglycan transglycosylase.